A 167-amino-acid chain; its full sequence is MNFEGFFTKEEMEKIKEEHDRDWRVGATYFKFNDDRITIFVFGYVPGDEFEYNMDLVISQIENVQFPVFCFTFYEKFSGEVMHLPVTKFCLNSLANNNEITFVFCDRIEEVKEKEAICTKERVLHMKNLVKEKAKQMLASFKEFDQNFVFREYIRTIKNPPPSCNPD.

This is an uncharacterized protein from Acidianus convivator (ATV).